The primary structure comprises 199 residues: MAPGSDMHSLDALVQALRRLPGVGVKSAQRMAFHLLQHDRQGAEVLSRALHDAAQSVRHCARCHTFTEGEVCSTCLDPSRDASRLAVVETPADQAALERTGAFRGLYFVLMGKLSPLDGIGPKDIGFGKLLERAGDGVVQEVILATNFTAEGEATAHALSETLKARGMHVTRLARGVPVGSELEYVDLGTIAHALVDRR.

A C4-type zinc finger spans residues 60–75 (CARCHTFTEGEVCSTC). In terms of domain architecture, Toprim spans 83–178 (SRLAVVETPA…HVTRLARGVP (96 aa)).

Belongs to the RecR family.

Its function is as follows. May play a role in DNA repair. It seems to be involved in an RecBC-independent recombinational process of DNA repair. It may act with RecF and RecO. This Paracidovorax citrulli (strain AAC00-1) (Acidovorax citrulli) protein is Recombination protein RecR.